The chain runs to 337 residues: Inositol 2-dehydrogenase (337 aa).

This sequence belongs to the Gfo/Idh/MocA family. Homotetramer.

It catalyses the reaction myo-inositol + NAD(+) = scyllo-inosose + NADH + H(+). Functionally, involved in the oxidation of myo-inositol (MI) to 2-keto-myo-inositol (2KMI or 2-inosose). The polypeptide is Inositol 2-dehydrogenase (Burkholderia cenocepacia (strain HI2424)).